A 90-amino-acid polypeptide reads, in one-letter code: UPF0237 protein MJ1558 (90 aa).

One can recognise an ACT domain in the interval valine 5–glutamine 79.

It belongs to the UPF0237 family.

The protein is UPF0237 protein MJ1558 of Methanocaldococcus jannaschii (strain ATCC 43067 / DSM 2661 / JAL-1 / JCM 10045 / NBRC 100440) (Methanococcus jannaschii).